Reading from the N-terminus, the 458-residue chain is Retinoic acid receptor gamma (458 aa).

A modulating region spans residues 1 to 89 (MATNKERLFA…PPPPPRVYKP (89 aa)). Arg34 bears the Omega-N-methylarginine mark. Residues 58-83 (MASLSVETQSTSSEEMVPSSPSPPPP) are disordered. Residues 62-71 (SVETQSTSSE) are compositionally biased toward polar residues. NR C4-type zinc fingers lie at residues 90-110 (CFVCNDKSSGYHYGVSSCEGC) and 126-150 (CHRDKNCIINKVTRNRCQYCRLQKC). Residues 90 to 155 (CFVCNDKSSG…RLQKCFEVGM (66 aa)) constitute a DNA-binding region (nuclear receptor). The tract at residues 156 to 184 (SKEAVRNDRNKKKKEVKEEGSPDSYELSP) is hinge. A disordered region spans residues 161-180 (RNDRNKKKKEVKEEGSPDSY). Residues Lys172 and Lys401 each participate in a glycyl lysine isopeptide (Lys-Gly) (interchain with G-Cter in SUMO2) cross-link. The 235-residue stretch at 185–419 (QLEELITKVS…PLIREMLENP (235 aa)) folds into the NR LBD domain. Positions 409 to 458 (PPLIREMLENPEMFEDDSSKPGPHPKASSEDEAPGGQGKRGQSPQPDQGP) are disordered. Positions 448–458 (RGQSPQPDQGP) are enriched in polar residues.

The protein belongs to the nuclear hormone receptor family. NR1 subfamily. As to quaternary structure, homodimer. Heterodimer with a RXR molecule. Binds DNA preferentially as a RAR/RXR heterodimer. Forms a complex with PUS1 and the SRA1 RNA in the nucleus.

Its subcellular location is the nucleus. The protein resides in the cytoplasm. Functionally, receptor for retinoic acid. Retinoic acid receptors bind as heterodimers to their target response elements in response to their ligands, all-trans or 9-cis retinoic acid, and regulate gene expression in various biological processes. The RAR/RXR heterodimers bind to the retinoic acid response elements (RARE) composed of tandem 5'-AGGTCA-3' sites known as DR1-DR5. In the absence of ligand, acts mainly as an activator of gene expression due to weak binding to corepressors. Required for limb bud development. In concert with RARA or RARB, required for skeletal growth, matrix homeostasis and growth plate function. The protein is Retinoic acid receptor gamma (Rarg) of Mus musculus (Mouse).